A 997-amino-acid chain; its full sequence is Kinesin-like protein KIF19 (997 aa).

The 336-residue stretch at 11-346 folds into the Kinesin motor domain; the sequence is QLTVALRIRP…LTYADRAKNI (336 aa). An ATP-binding site is contributed by 104-111; the sequence is GPTGCGKT. Residues 360–437 adopt a coiled-coil conformation; that stretch reads HIAQYTSIIS…REQMDIRRQL (78 aa). Residues 468–491 show a composition bias toward basic and acidic residues; sequence RARKWRDEHRKETYGKDDSEKDSD. Positions 468–503 are disordered; the sequence is RARKWRDEHRKETYGKDDSEKDSDTGDDQSDFIEPP. Residues 508-577 are a coiled coil; sequence ARETIQILEG…ELEIENTEMQ (70 aa). Disordered stretches follow at residues 662–690, 792–811, and 848–890; these read NLTAEENLQEPDSDQESVRTFGSDNRNPI, GDRLQPMKERSNLSVHSMSE, and GGGS…SRSF. Composition is skewed to basic and acidic residues over residues 792–802 and 869–880; these read GDRLQPMKERS and QKLEKREESLEV. A coiled-coil region spans residues 861 to 889; the sequence is HRTQKKQAQKLEKREESLEVKRRKKRSRS.

Belongs to the TRAFAC class myosin-kinesin ATPase superfamily. Kinesin family.

It is found in the cytoplasm. Its subcellular location is the cytoskeleton. The protein resides in the cell projection. The protein localises to the cilium. Functionally, plus end-directed microtubule-dependent motor protein that regulates the length of motile cilia by mediating depolymerization of microtubules at ciliary tips. The protein is Kinesin-like protein KIF19 (kif19) of Xenopus laevis (African clawed frog).